Reading from the N-terminus, the 297-residue chain is UBX domain-containing protein 1 (297 aa).

An N-acetylalanine modification is found at A2. The 41-residue stretch at 2-42 (AELTALESLIEMGFPRGRAEKALALTGNQGIEAAMDWLMEH) folds into the UBA domain. The segment at 38 to 212 (WLMEHEDDPD…QEPPTKREYD (175 aa)) is disordered. Over residues 42–52 (HEDDPDVDEPL) the composition is skewed to acidic residues. The interaction with BRCA1 stretch occupies residues 43–297 (EDDPDVDEPL…VLIVAKKCPS (255 aa)). 2 stretches are compositionally biased toward basic and acidic residues: residues 86 to 122 (LTEE…EREK) and 137 to 177 (KLQE…ERAQ). Residues 86 to 172 (LTEEERQEQT…RVREKIERDK (87 aa)) adopt a coiled-coil conformation. S199 bears the Phosphoserine mark. At S200 the chain carries Phosphoserine; by MAPK12. Residues T207 and T229 each carry the phosphothreonine modification. Residues 209-291 (REYDQCRIQV…GLVPSAVLIV (83 aa)) enclose the UBX domain. S270 carries the phosphoserine modification.

Component of a complex required to couple retrotranslocation, ubiquitination and deglycosylation composed of NGLY1, SAKS1, AMFR, VCP and RAD23B. Interacts with HOMER2. Interacts directly with VCP. Interacts with BRCA1 and BARD1; interaction takes place when BRCA1 is not autoubiquitinated bur is strongly enhanced in the presence of autoubiquitinated BRCA1.

It is found in the cytoplasm. Functionally, ubiquitin-binding protein that interacts with the BRCA1-BARD1 heterodimer, and regulates its activity. Specifically binds 'Lys-6'-linked polyubiquitin chains. Interaction with autoubiquitinated BRCA1, leads to inhibit the E3 ubiquitin-protein ligase activity of the BRCA1-BARD1 heterodimer. Component of a complex required to couple deglycosylation and proteasome-mediated degradation of misfolded proteins in the endoplasmic reticulum that are retrotranslocated in the cytosol. The protein is UBX domain-containing protein 1 (Ubxn1) of Rattus norvegicus (Rat).